Reading from the N-terminus, the 263-residue chain is 4-hydroxy-tetrahydrodipicolinate reductase (263 aa).

NAD(+) is bound by residues 8 to 13 (GACGKM), D34, 97 to 99 (GTT), and 123 to 126 (APNF). Residue H153 is the Proton donor/acceptor of the active site. H154 serves as a coordination point for (S)-2,3,4,5-tetrahydrodipicolinate. The Proton donor role is filled by K157. 163–164 (GT) contributes to the (S)-2,3,4,5-tetrahydrodipicolinate binding site.

Belongs to the DapB family.

Its subcellular location is the cytoplasm. The enzyme catalyses (S)-2,3,4,5-tetrahydrodipicolinate + NAD(+) + H2O = (2S,4S)-4-hydroxy-2,3,4,5-tetrahydrodipicolinate + NADH + H(+). It catalyses the reaction (S)-2,3,4,5-tetrahydrodipicolinate + NADP(+) + H2O = (2S,4S)-4-hydroxy-2,3,4,5-tetrahydrodipicolinate + NADPH + H(+). Its pathway is amino-acid biosynthesis; L-lysine biosynthesis via DAP pathway; (S)-tetrahydrodipicolinate from L-aspartate: step 4/4. Catalyzes the conversion of 4-hydroxy-tetrahydrodipicolinate (HTPA) to tetrahydrodipicolinate. In Carboxydothermus hydrogenoformans (strain ATCC BAA-161 / DSM 6008 / Z-2901), this protein is 4-hydroxy-tetrahydrodipicolinate reductase.